The chain runs to 335 residues: uncharacterized protein (335 aa).

28–35 (GPINSGKT) provides a ligand contact to ATP.

The protein belongs to the archaeal ATPase family.

This is an uncharacterized protein from Pyrococcus abyssi (strain GE5 / Orsay).